A 435-amino-acid polypeptide reads, in one-letter code: Putative BTB/POZ domain-containing protein L275 (435 aa).

The region spanning 80–149 (YDGYVYINVG…IKGKQNDNHN (70 aa)) is the BTB domain.

The protein belongs to the mimivirus BTB/WD family.

This chain is Putative BTB/POZ domain-containing protein L275, found in Acanthamoeba polyphaga mimivirus (APMV).